The following is a 99-amino-acid chain: Protein SPIRAL1-like 5 (99 aa).

A compositionally biased stretch (gly residues) spans 1 to 12; the sequence is MSRGGSFGGGQS. A disordered region spans residues 1–99; that stretch reads MSRGGSFGGG…SSLGYLFGDK (99 aa). Positions 27-39 are enriched in pro residues; it reads TPAPPVAPKPAPP. Residues 56–73 are compositionally biased toward polar residues; that stretch reads KISNNNYQRVQGQNSGNF. Phosphoserine is present on serine 58.

Belongs to the SPIRAL1 family. As to expression, expressed exclusively in stems and flowers.

Acts redundantly with SPR1 in maintaining the cortical microtubules organization essential for anisotropic cell growth. The chain is Protein SPIRAL1-like 5 (SP1L5) from Arabidopsis thaliana (Mouse-ear cress).